Here is a 409-residue protein sequence, read N- to C-terminus: Probable peptidoglycan glycosyltransferase FtsW (409 aa).

9 helical membrane passes run Leu42–Leu62, Pro72–Ala92, Leu108–Gly128, Val135–Ala155, Leu178–Leu198, Leu213–Val233, Phe303–Ile323, Tyr337–Ala357, and Leu368–Leu388.

This sequence belongs to the SEDS family. FtsW subfamily.

It localises to the cell inner membrane. The enzyme catalyses [GlcNAc-(1-&gt;4)-Mur2Ac(oyl-L-Ala-gamma-D-Glu-L-Lys-D-Ala-D-Ala)](n)-di-trans,octa-cis-undecaprenyl diphosphate + beta-D-GlcNAc-(1-&gt;4)-Mur2Ac(oyl-L-Ala-gamma-D-Glu-L-Lys-D-Ala-D-Ala)-di-trans,octa-cis-undecaprenyl diphosphate = [GlcNAc-(1-&gt;4)-Mur2Ac(oyl-L-Ala-gamma-D-Glu-L-Lys-D-Ala-D-Ala)](n+1)-di-trans,octa-cis-undecaprenyl diphosphate + di-trans,octa-cis-undecaprenyl diphosphate + H(+). It functions in the pathway cell wall biogenesis; peptidoglycan biosynthesis. Functionally, peptidoglycan polymerase that is essential for cell division. This is Probable peptidoglycan glycosyltransferase FtsW from Idiomarina loihiensis (strain ATCC BAA-735 / DSM 15497 / L2-TR).